A 551-amino-acid polypeptide reads, in one-letter code: Mesoderm induction early response protein 3 (551 aa).

Low complexity predominate over residues 1 to 16 (MAEASFGSSSPVGSLS). Disordered regions lie at residues 1 to 62 (MAEA…EKEG) and 113 to 169 (LSGD…GNSP). Residues 17-36 (SEDHDFDPTAEMLVHDYDDE) are compositionally biased toward basic and acidic residues. Phosphoserine is present on residues Ser-52, Ser-53, and Ser-114. The segment covering 121–134 (QSSADDLTPSVTSH) has biased composition (polar residues). Residues 154–163 (KESEIEDVET) show a composition bias toward acidic residues. Phosphoserine is present on Ser-156. Thr-163 carries the post-translational modification Phosphothreonine. 2 positions are modified to phosphoserine: Ser-165 and Ser-168. The 100-residue stretch at 174–273 (REIMIGLEYQ…EAIERYCCNG (100 aa)) folds into the ELM2 domain. The SANT domain occupies 278–330 (EGMTAWTEEECRSFEHALMLHGKDFHLIQKDKVRSRTVAECVAFYYMWKKSER).

Its subcellular location is the nucleus. Its function is as follows. Transcriptional repressor. This is Mesoderm induction early response protein 3 (Mier3) from Mus musculus (Mouse).